We begin with the raw amino-acid sequence, 244 residues long: Large ribosomal subunit protein bL25 (244 aa).

Residues 197–244 (ADVEAEAAEAALAKEAATEAAEEEETEKPASEAEASGEAEQADTDKKE) are disordered. Residues 204 to 215 (AEAALAKEAATE) show a composition bias toward low complexity.

The protein belongs to the bacterial ribosomal protein bL25 family. CTC subfamily. In terms of assembly, part of the 50S ribosomal subunit; part of the 5S rRNA/L5/L18/L25 subcomplex. Contacts the 5S rRNA. Binds to the 5S rRNA independently of L5 and L18.

In terms of biological role, this is one of the proteins that binds to the 5S RNA in the ribosome where it forms part of the central protuberance. This chain is Large ribosomal subunit protein bL25, found in Coxiella burnetii (strain CbuK_Q154) (Coxiella burnetii (strain Q154)).